The sequence spans 894 residues: Translation initiation factor IF-2 (894 aa).

The disordered stretch occupies residues 47-305 (AHLNRENGSG…GSALQQSFQK (259 aa)). Polar residues predominate over residues 68–82 (STLNIPGTGGKSKSV). 2 stretches are compositionally biased toward basic and acidic residues: residues 93–159 (VKRD…KDKV) and 166–219 (DMTK…KWTD). The span at 254–269 (GRSRNAKAARPAKKGN) shows a compositional bias: basic residues. Basic and acidic residues predominate over residues 270-283 (KHSESKADREEARA). The tr-type G domain maps to 393 to 562 (PRAPVVTIMG…LLQAEVLELK (170 aa)). The segment at 402–409 (GHVDHGKT) is G1. Position 402 to 409 (402 to 409 (GHVDHGKT)) interacts with GTP. Residues 427-431 (GITQH) form a G2 region. Positions 448–451 (DTPG) are G3. GTP is bound by residues 448–452 (DTPGH) and 502–505 (NKID). The G4 stretch occupies residues 502–505 (NKID). The tract at residues 538–540 (SAK) is G5.

It belongs to the TRAFAC class translation factor GTPase superfamily. Classic translation factor GTPase family. IF-2 subfamily.

Its subcellular location is the cytoplasm. One of the essential components for the initiation of protein synthesis. Protects formylmethionyl-tRNA from spontaneous hydrolysis and promotes its binding to the 30S ribosomal subunits. Also involved in the hydrolysis of GTP during the formation of the 70S ribosomal complex. The protein is Translation initiation factor IF-2 of Citrobacter koseri (strain ATCC BAA-895 / CDC 4225-83 / SGSC4696).